The primary structure comprises 118 residues: Small ribosomal subunit protein uS13 (118 aa).

The disordered stretch occupies residues 94-118 (SLPLRGQRTKTNARTRKGPRKPIKR).

It belongs to the universal ribosomal protein uS13 family. In terms of assembly, part of the 30S ribosomal subunit. Forms a loose heterodimer with protein S19. Forms two bridges to the 50S subunit in the 70S ribosome.

Its function is as follows. Located at the top of the head of the 30S subunit, it contacts several helices of the 16S rRNA. In the 70S ribosome it contacts the 23S rRNA (bridge B1a) and protein L5 of the 50S subunit (bridge B1b), connecting the 2 subunits; these bridges are implicated in subunit movement. Contacts the tRNAs in the A and P-sites. The chain is Small ribosomal subunit protein uS13 from Photobacterium profundum (strain SS9).